A 341-amino-acid chain; its full sequence is Biotin synthase (341 aa).

The region spanning 40 to 267 (AEIQVSTLLS…RSMVRLSAGR (228 aa)) is the Radical SAM core domain. Positions 55, 59, and 62 each coordinate [4Fe-4S] cluster. Positions 99, 130, 190, and 262 each coordinate [2Fe-2S] cluster.

Belongs to the radical SAM superfamily. Biotin synthase family. As to quaternary structure, homodimer. [4Fe-4S] cluster is required as a cofactor. It depends on [2Fe-2S] cluster as a cofactor.

The enzyme catalyses (4R,5S)-dethiobiotin + (sulfur carrier)-SH + 2 reduced [2Fe-2S]-[ferredoxin] + 2 S-adenosyl-L-methionine = (sulfur carrier)-H + biotin + 2 5'-deoxyadenosine + 2 L-methionine + 2 oxidized [2Fe-2S]-[ferredoxin]. It participates in cofactor biosynthesis; biotin biosynthesis; biotin from 7,8-diaminononanoate: step 2/2. Catalyzes the conversion of dethiobiotin (DTB) to biotin by the insertion of a sulfur atom into dethiobiotin via a radical-based mechanism. This chain is Biotin synthase, found in Xylella fastidiosa (strain 9a5c).